The sequence spans 158 residues: MLGKTALSTLCASRQAPITLAARGIANIPAHEYHIRFDQKVGRKRPAQDVLDRFKRLNNGMWIHAHPGRHKLRYMKDETWQKTSLYYETCTKEQCEILDKLMTPYWLRPKHYPNDPYSAYNVRHNVTSPRVDDRGNFVRERKKVLMDDSTSKRFFKDC.

It belongs to the bacterial ribosomal protein bL35 family.

The protein resides in the mitochondrion. The sequence is that of Large ribosomal subunit protein bL35m (mrpl-35) from Caenorhabditis elegans.